Consider the following 432-residue polypeptide: Cyclic 2,3-diphosphoglycerate synthetase (432 aa).

The protein belongs to the cyclic 2,3-diphosphoglycerate synthetase family.

It is found in the cytoplasm. It catalyses the reaction (2R)-2,3-bisphosphoglycerate + ATP + H(+) = cyclic (2R)-2,3-bisphosphoglycerate + ADP + phosphate. Catalyzes the formation of cyclic 2,3-diphosphoglycerate (cDPG) by formation of an intramolecular phosphoanhydride bond at the expense of ATP. The chain is Cyclic 2,3-diphosphoglycerate synthetase from Thermococcus kodakarensis (strain ATCC BAA-918 / JCM 12380 / KOD1) (Pyrococcus kodakaraensis (strain KOD1)).